A 531-amino-acid chain; its full sequence is UDP-glucuronosyltransferase 1A7 (531 aa).

The signal sequence occupies residues 1-25; it reads MAPADFPASLPLCVCLLLASGLAQA. N-linked (GlcNAc...) asparagine glycosylation is found at Asn-293 and Asn-431. The chain crosses the membrane as a helical span at residues 489 to 509; it reads VIGFLLAIVLTVVFIVFKCCA.

This sequence belongs to the UDP-glycosyltransferase family. In terms of assembly, homodimer. Homooligomer. Interacts with UGT1A1, UGT1A3, UGT1A4, UGT1A6, UGT1A8, UGT1A9 and UGT1A10 to form heterodimers. Widely expressed with highest levels detected in colon and kidney.

It localises to the endoplasmic reticulum membrane. The enzyme catalyses glucuronate acceptor + UDP-alpha-D-glucuronate = acceptor beta-D-glucuronoside + UDP + H(+). The catalysed reaction is 17alpha-estradiol + UDP-alpha-D-glucuronate = 17alpha-estradiol 3-O-(beta-D-glucuronate) + UDP + H(+). It carries out the reaction prunetin + UDP-alpha-D-glucuronate = prunetin-5-O-beta-D-glucuronide + UDP. It catalyses the reaction 5-epi-5-F2t-IsoP + UDP-alpha-D-glucuronate = 5-epi-5-F2t-IsoP-glucuronide + UDP + H(+). The enzyme catalyses (E)-ferulate + UDP-alpha-D-glucuronate = (E)-ferulic acid beta-D-glucuronate ester + UDP. The catalysed reaction is candesartan + UDP-alpha-D-glucuronate = candesartan O-beta-D-glucuronoside + UDP. It carries out the reaction SN-38 + UDP-alpha-D-glucuronate = SN-38 O-beta-D-glucuronide + UDP + H(+). It catalyses the reaction mycophenolate + UDP-alpha-D-glucuronate = mycophenolate 7-O-beta-D-glucuronide + UDP + H(+). UDP-glucuronosyltransferase (UGT) that catalyzes phase II biotransformation reactions in which lipophilic substrates are conjugated with glucuronic acid to increase the metabolite's water solubility, thereby facilitating excretion into either the urine or bile. Essential for the elimination and detoxification of drugs, xenobiotics and endogenous compounds. Catalyzes the glucuronidation of endogenous estrogen hormone epiestradiol. Involved in the glucuronidation of F2-isoprostane (5-epi-5-F2t-IsoP). Involved in the glucuronidation of the phytochemical ferulic acid at the carboxylic acid group. Also catalyzes the glucuronidation of the isoflavones genistein, daidzein, glycitein, formononetin, biochanin A and prunetin, which are phytoestrogens with anticancer and cardiovascular properties. Involved in the glucuronidation of the AGTR1 angiotensin receptor antagonist caderastan, a drug which can inhibit the effect of angiotensin II. Involved in the biotransformation of 7-ethyl-10-hydroxycamptothecin (SN-38), the pharmacologically active metabolite of the anticancer drug irinotecan. Also metabolizes mycophenolate, an immunosuppressive agent. The chain is UDP-glucuronosyltransferase 1A7 from Mus musculus (Mouse).